A 132-amino-acid chain; its full sequence is ATP synthase epsilon chain (132 aa).

Residues 88–102 (IDKERAEAARQRAQE) show a composition bias toward basic and acidic residues. Residues 88-112 (IDKERAEAARQRAQERLNSQSDDTD) are disordered.

Belongs to the ATPase epsilon chain family. In terms of assembly, F-type ATPases have 2 components, CF(1) - the catalytic core - and CF(0) - the membrane proton channel. CF(1) has five subunits: alpha(3), beta(3), gamma(1), delta(1), epsilon(1). CF(0) has three main subunits: a, b and c. The F(1)F(0) complex interacts with SpoIIIJ and YqjG; YqgA is found in the same complex.

Its subcellular location is the cell membrane. Produces ATP from ADP in the presence of a proton gradient across the membrane. This Bacillus subtilis (strain 168) protein is ATP synthase epsilon chain (atpC).